A 214-amino-acid polypeptide reads, in one-letter code: MKAFTQHTGIVAPLDRANVDTDQIIPKQFLKSIKRTGFGPNLFDEWRYLDVGQPYQDNSKRPLNEEFVLNHARYQGASVLLARENFGCGSSREHAPWALDEYGFRSIIAPSFADIFFNNSFKNGLLPIILSDEEVDELFKQVEANPGYQLTIDLQAQAVTRPDGKVLHFEIDAFRKHCLLNGLDDIGLTLQDSDAIKAFEAKHRASQPWLFRDA.

The protein belongs to the LeuD family. LeuD type 1 subfamily. Heterodimer of LeuC and LeuD.

It carries out the reaction (2R,3S)-3-isopropylmalate = (2S)-2-isopropylmalate. It participates in amino-acid biosynthesis; L-leucine biosynthesis; L-leucine from 3-methyl-2-oxobutanoate: step 2/4. Its function is as follows. Catalyzes the isomerization between 2-isopropylmalate and 3-isopropylmalate, via the formation of 2-isopropylmaleate. In Pseudomonas putida (strain ATCC 47054 / DSM 6125 / CFBP 8728 / NCIMB 11950 / KT2440), this protein is 3-isopropylmalate dehydratase small subunit.